A 213-amino-acid chain; its full sequence is Heat shock protein 27 (213 aa).

Serine 58 and serine 75 each carry phosphoserine. The sHSP domain maps to 71–182 (SRRASGGPNA…SERIVQIQQT (112 aa)). A disordered region spans residues 157–213 (VLTLKAPPPPSKEQAKSERIVQIQQTGPAHLSVKAPAPEAGDGKAENGSGEKMETSK). The segment covering 197–213 (GDGKAENGSGEKMETSK) has biased composition (basic and acidic residues).

It belongs to the small heat shock protein (HSP20) family.

The sequence is that of Heat shock protein 27 (Hsp27) from Drosophila melanogaster (Fruit fly).